The following is a 564-amino-acid chain: Aspyridones efflux protein (564 aa).

Positions 1–17 (MHPDQADTAAMQQQTTT) are enriched in low complexity. Residues 1 to 49 (MHPDQADTAAMQQQTTTECSDRSRPEKAEEGHAREHTVTRTCSREPEQT) form a disordered region. Positions 19–47 (CSDRSRPEKAEEGHAREHTVTRTCSREPE) are enriched in basic and acidic residues. 10 helical membrane-spanning segments follow: residues 66-86 (AICL…TAIP), 127-147 (WTFL…ATAP), 158-178 (IAGC…THSV), 185-205 (LFMA…PPLG), 216-236 (WCFW…VFLF), 260-280 (VGTL…QWGG), 287-307 (SGIV…FGIV), 335-355 (FALG…FQGV), 368-388 (LPML…VTII), and 392-412 (APFM…LLLF). Asn-415 carries an N-linked (GlcNAc...) asparagine glycan. Helical transmembrane passes span 416 to 436 (VTAA…GFGW) and 454 to 474 (IATA…VSVA). An N-linked (GlcNAc...) asparagine glycan is attached at Asn-524. The chain crosses the membrane as a helical span at residues 528–548 (LSAFFVATIMAIMSLVGCTFV).

Belongs to the major facilitator superfamily. TCR/Tet family.

The protein localises to the cell membrane. Functionally, efflux pump that may be involved in the secretion of leporins. The chain is Aspyridones efflux protein (TP) from Neocamarosporium betae (Beet black rot fungus).